The primary structure comprises 695 residues: NADPH--cytochrome P450 reductase (695 aa).

Residues 1-8 lie on the Lumenal side of the membrane; it reads MAQLDTLD. The chain crosses the membrane as a helical span at residues 9-31; that stretch reads LVVLVVLLVGSAAYFTKGTYWAV. The Cytoplasmic portion of the chain corresponds to 32 to 695; sequence PKDPYAASGP…SGSYQEDVWS (664 aa). Residues 66-221 enclose the Flavodoxin-like domain; sequence CVIFYGSQTG…DFLAWKEPMW (156 aa). Residues 72–77, 123–126, 169–178, and aspartate 204 each bind FMN; these read SQTGTA, ATYG, and LGNNTYEHYQ. The 262-residue stretch at 277–538 folds into the FAD-binding FR-type domain; the sequence is HNPFIAPIVE…HVRHSNFKLP (262 aa). Arginine 296 lines the NADP(+) pocket. Residues 451–454, 469–471, and 486–489 each bind FAD; these read RYYS, TAV, and GVTT. NADP(+) is bound by residues threonine 552, 614 to 615, 620 to 624, and glutamate 656; these read SR and KVYVQ. Tryptophan 694 provides a ligand contact to FAD.

This sequence belongs to the NADPH--cytochrome P450 reductase family. The protein in the N-terminal section; belongs to the flavodoxin family. It in the C-terminal section; belongs to the flavoprotein pyridine nucleotide cytochrome reductase family. It depends on FAD as a cofactor. FMN is required as a cofactor.

The protein resides in the endoplasmic reticulum membrane. It is found in the mitochondrion outer membrane. Its subcellular location is the cell membrane. It carries out the reaction 2 oxidized [cytochrome P450] + NADPH = 2 reduced [cytochrome P450] + NADP(+) + H(+). Functionally, this enzyme is required for electron transfer from NADP to cytochrome P450 in microsomes. It can also provide electron transfer to heme oxygenase and cytochrome B5. Involved in ergosterol biosynthesis. In Aspergillus terreus (strain NIH 2624 / FGSC A1156), this protein is NADPH--cytochrome P450 reductase.